The following is an 82-amino-acid chain: Escargot/snail protein homolog (82 aa).

C2H2-type zinc fingers lie at residues 1–5, 18–40, 44–66, and 72–82; these read HLQFH, FSCKLCDKVYTSLGALKMHIRTH, CKCDICHKAFSRPWLLQGHIRTH, and FSCQHCHRAFA.

It belongs to the snail C2H2-type zinc-finger protein family.

Its subcellular location is the nucleus. This is Escargot/snail protein homolog from Bradysia coprophila (Dark-winged fungus gnat).